Reading from the N-terminus, the 312-residue chain is Zinc transporter ZitB (312 aa).

5 consecutive transmembrane segments (helical) span residues 21 to 41 (LLFA…GGIL), 48 to 68 (LADA…LLVV), 90 to 110 (AAFV…WEAI), 123 to 143 (LMMV…WILH), and 164 to 184 (LLGS…GWTP).

Belongs to the cation diffusion facilitator (CDF) transporter (TC 2.A.4) family. SLC30A subfamily.

It localises to the cell inner membrane. Functionally, involved in zinc efflux across the cytoplasmic membrane, thus reducing zinc accumulation in the cytoplasm and rendering bacteria more resistant to zinc. It may contribute to zinc homeostasis at low concentrations of zinc. In Salmonella typhi, this protein is Zinc transporter ZitB.